The chain runs to 527 residues: Probable T-complex protein 1 subunit beta (527 aa).

It belongs to the TCP-1 chaperonin family. Heterooligomeric complex of about 850 to 900 kDa that forms two stacked rings, 12 to 16 nm in diameter.

The protein resides in the cytoplasm. Its function is as follows. Molecular chaperone; assists the folding of proteins upon ATP hydrolysis. Known to play a role, in vitro, in the folding of actin and tubulin. This is Probable T-complex protein 1 subunit beta (cct2) from Schizosaccharomyces pombe (strain 972 / ATCC 24843) (Fission yeast).